The primary structure comprises 311 residues: Formimidoylglutamase (311 aa).

6 residues coordinate Mn(2+): histidine 130, aspartate 155, histidine 157, aspartate 159, cysteine 242, and aspartate 244.

It belongs to the arginase family. Mn(2+) serves as cofactor.

It catalyses the reaction N-formimidoyl-L-glutamate + H2O = formamide + L-glutamate. It functions in the pathway amino-acid degradation; L-histidine degradation into L-glutamate; L-glutamate from N-formimidoyl-L-glutamate (hydrolase route): step 1/1. Catalyzes the conversion of N-formimidoyl-L-glutamate to L-glutamate and formamide. The protein is Formimidoylglutamase of Staphylococcus haemolyticus (strain JCSC1435).